The following is a 100-amino-acid chain: MKITQEEVTHVANLSKLRFSEEETAAFATTLSKIVDMVELLGEVDTTGVAPTTTMADRKTVLRPDVVEEGTDRDRLFKNVPEQDNYYIKVPAILDDGGDA.

It belongs to the GatC family. In terms of assembly, heterotrimer of A, B and C subunits.

The enzyme catalyses L-glutamyl-tRNA(Gln) + L-glutamine + ATP + H2O = L-glutaminyl-tRNA(Gln) + L-glutamate + ADP + phosphate + H(+). It carries out the reaction L-aspartyl-tRNA(Asn) + L-glutamine + ATP + H2O = L-asparaginyl-tRNA(Asn) + L-glutamate + ADP + phosphate + 2 H(+). Its function is as follows. Allows the formation of correctly charged Asn-tRNA(Asn) or Gln-tRNA(Gln) through the transamidation of misacylated Asp-tRNA(Asn) or Glu-tRNA(Gln) in organisms which lack either or both of asparaginyl-tRNA or glutaminyl-tRNA synthetases. The reaction takes place in the presence of glutamine and ATP through an activated phospho-Asp-tRNA(Asn) or phospho-Glu-tRNA(Gln). The sequence is that of Aspartyl/glutamyl-tRNA(Asn/Gln) amidotransferase subunit C from Streptococcus pneumoniae (strain Hungary19A-6).